A 193-amino-acid polypeptide reads, in one-letter code: dTTP/UTP pyrophosphatase (193 aa).

Asp75 (proton acceptor) is an active-site residue.

It belongs to the Maf family. YhdE subfamily. Requires a divalent metal cation as cofactor.

The protein localises to the cytoplasm. The catalysed reaction is dTTP + H2O = dTMP + diphosphate + H(+). It carries out the reaction UTP + H2O = UMP + diphosphate + H(+). In terms of biological role, nucleoside triphosphate pyrophosphatase that hydrolyzes dTTP and UTP. May have a dual role in cell division arrest and in preventing the incorporation of modified nucleotides into cellular nucleic acids. This is dTTP/UTP pyrophosphatase from Chlorobium luteolum (strain DSM 273 / BCRC 81028 / 2530) (Pelodictyon luteolum).